We begin with the raw amino-acid sequence, 326 residues long: F-box/LRR-repeat protein 12 (326 aa).

The F-box domain occupies Met-1–Val-47. 8 LRR repeats span residues Leu-51–Gly-78, Ala-86–Val-111, Asp-113–Ser-133, Val-161–Gly-185, Thr-186–Gly-211, Cys-212–Thr-236, Val-237–Gly-261, and Pro-266–Gly-291.

As to quaternary structure, interacts with SKP1 and CUL1.

It participates in protein modification; protein ubiquitination. Functionally, substrate-recognition component of the SCF (SKP1-CUL1-F-box protein)-type E3 ubiquitin ligase complex. Mediates the polyubiquitination and proteasomal degradation of CAMK1 leading to disruption of cyclin D1/CDK4 complex assembly which results in G1 cell cycle arrest in lung epithelia. This is F-box/LRR-repeat protein 12 (Fbxl12) from Mus musculus (Mouse).